We begin with the raw amino-acid sequence, 423 residues long: UPF0229 protein Psyr_4632 (423 aa).

The segment at 65 to 110 (HHGRGGKQTVVHPGNKEFTTGEHIARPQGGGGGKGPGKAGNSGEGM) is disordered. A compositionally biased stretch (gly residues) spans 92–107 (QGGGGGKGPGKAGNSG).

This sequence belongs to the UPF0229 family.

This chain is UPF0229 protein Psyr_4632, found in Pseudomonas syringae pv. syringae (strain B728a).